We begin with the raw amino-acid sequence, 577 residues long: Hemagglutinin-neuraminidase (577 aa).

The Intravirion portion of the chain corresponds to 1-26 (MDRAVSQVALENDEREAKNTWRLIFR). A helical membrane pass occupies residues 27–47 (IAILLLTVVTLATSVASLVYS). Residues 48–577 (MGASTPSDLV…NDGVREARSG (530 aa)) are Virion surface-facing. Asparagine 119 carries an N-linked (GlcNAc...) asparagine; by host glycan. Residues 124–152 (GAPIHDPDFIGGIGKELIVDDASDVTSFY) are important for interaction with fusion/F protein. Cystine bridges form between cysteine 172-cysteine 196, cysteine 186-cysteine 247, and cysteine 238-cysteine 251. The tract at residues 234 to 239 (NRKSCS) is involved in neuraminidase activity. N-linked (GlcNAc...) asparagine; by host glycosylation is found at asparagine 341 and asparagine 433. 2 cysteine pairs are disulfide-bonded: cysteine 344-cysteine 461 and cysteine 455-cysteine 465. 2 N-linked (GlcNAc...) asparagine; by host glycosylation sites follow: asparagine 481 and asparagine 538. Residues cysteine 531 and cysteine 542 are joined by a disulfide bond.

Belongs to the paramyxoviruses hemagglutinin-neuraminidase family. As to quaternary structure, homotetramer; composed of disulfide-linked homodimers. Interacts with F protein trimer. Interacts with host CG-1B; this interaction inhibits viral adsorption and replication rather than internalization.

The protein resides in the virion membrane. It is found in the host cell membrane. It carries out the reaction Hydrolysis of alpha-(2-&gt;3)-, alpha-(2-&gt;6)-, alpha-(2-&gt;8)- glycosidic linkages of terminal sialic acid residues in oligosaccharides, glycoproteins, glycolipids, colominic acid and synthetic substrates.. Its function is as follows. Mediates the viral entry into the host cell together with fusion/F protein. Attaches the virus to sialic acid-containing cell receptors and thereby initiates infection. Binding of HN protein to the receptor induces a conformational change that allows the F protein to trigger virion/cell membranes fusion. Functionally, neuraminidase activity ensures the efficient spread of the virus by dissociating the mature virions from the neuraminic acid containing glycoproteins. This Gallus gallus (Chicken) protein is Hemagglutinin-neuraminidase (HN).